The following is a 488-amino-acid chain: Dipeptidase 3 (488 aa).

A signal peptide spans 1 to 35 (MQPTGPEGPRALSLRPLGHRLSLLGVLLIIPSLWV). Low complexity predominate over residues 41-60 (TPSLSSAPTSPGASSAMTTP). The disordered stretch occupies residues 41-74 (TPSLSSAPTSPGASSAMTTPGIPNDTTTSGVTSD). 2 disulfide bridges follow: Cys-143–Cys-222 and Cys-294–Cys-326. Asn-331 carries an N-linked (GlcNAc...) asparagine glycan. Ser-459 carries the GPI-anchor amidated serine lipid modification. Residues 460–487 (KAPPCPLLGLVAAVTSPAFTLWLCCSGH) constitute a propeptide, removed in mature form.

This sequence belongs to the metallo-dependent hydrolases superfamily. Peptidase M19 family. As to quaternary structure, homodimer; disulfide-linked. Interacts with TEX101; co-localized on the cell surface of spermatocytes, spermatids, and testicular spermatozoa, co-localized only in cytoplasmic droplets of caput and corpus epididymal sperm.

It localises to the membrane. In terms of biological role, lacks dipeptidase activity and is unable to hydrolyze cystinyl-bis-glycine, leukotriene D4 and the beta-lactam antibiotic imipenem. The absence of activity may be due to the inability of serine (instead of aspartate found in DPEP1/2) at position 356 to function as the acid/base catalyst and activate the nucleophilic water/hydroxide. The sequence is that of Dipeptidase 3 (Dpep3) from Rattus norvegicus (Rat).